The sequence spans 53 residues: MSPAQRRILLYILSFIFVIGAVVYFVKSDYLFTLIFIAIAILFGMRARKADSR.

2 consecutive transmembrane segments (helical) span residues 8-28 and 30-50; these read ILLY…FVKS and YLFT…ARKA.

It localises to the cell membrane. Involved in the production of the bacteriocin subtilosin. Required for maximal production and for optimal immunity to subtilosin. The polypeptide is Antilisterial bacteriocin subtilosin biosynthesis protein AlbB (albB) (Bacillus subtilis (strain 168)).